The chain runs to 255 residues: tRNA pseudouridine synthase A (255 aa).

The active-site Nucleophile is Asp60. Tyr118 lines the substrate pocket.

The protein belongs to the tRNA pseudouridine synthase TruA family. Homodimer.

The catalysed reaction is uridine(38/39/40) in tRNA = pseudouridine(38/39/40) in tRNA. Its function is as follows. Formation of pseudouridine at positions 38, 39 and 40 in the anticodon stem and loop of transfer RNAs. The protein is tRNA pseudouridine synthase A of Leuconostoc mesenteroides subsp. mesenteroides (strain ATCC 8293 / DSM 20343 / BCRC 11652 / CCM 1803 / JCM 6124 / NCDO 523 / NBRC 100496 / NCIMB 8023 / NCTC 12954 / NRRL B-1118 / 37Y).